A 624-amino-acid chain; its full sequence is uncharacterized protein (624 aa).

The first 29 residues, 1–29, serve as a signal peptide directing secretion; it reads MRFHRQGTAATVGVLLIVLLGFCWKLSES. N-linked (GlcNAc...) asparagine glycosylation is found at asparagine 68, asparagine 150, asparagine 219, asparagine 366, asparagine 441, asparagine 447, asparagine 464, and asparagine 528. Positions 141-174 are disordered; sequence LERRHGRFGNGTHGDHPKGPPPPPPPDEKDRGSQ.

Its subcellular location is the secreted. This is an uncharacterized protein from Saccharomyces cerevisiae (strain ATCC 204508 / S288c) (Baker's yeast).